The following is a 467-amino-acid chain: Argininosuccinate lyase (467 aa).

It belongs to the lyase 1 family. Argininosuccinate lyase subfamily.

The protein resides in the cytoplasm. The enzyme catalyses 2-(N(omega)-L-arginino)succinate = fumarate + L-arginine. It functions in the pathway amino-acid biosynthesis; L-arginine biosynthesis; L-arginine from L-ornithine and carbamoyl phosphate: step 3/3. The polypeptide is Argininosuccinate lyase (Thioalkalivibrio sulfidiphilus (strain HL-EbGR7)).